The following is a 252-amino-acid chain: Thiazole synthase (252 aa).

Catalysis depends on Lys-98, which acts as the Schiff-base intermediate with DXP. Residues Gly-159, 185–186 (AG), and 207–208 (AT) each bind 1-deoxy-D-xylulose 5-phosphate.

It belongs to the ThiG family. Homotetramer. Forms heterodimers with either ThiH or ThiS.

The protein localises to the cytoplasm. The catalysed reaction is [ThiS sulfur-carrier protein]-C-terminal-Gly-aminoethanethioate + 2-iminoacetate + 1-deoxy-D-xylulose 5-phosphate = [ThiS sulfur-carrier protein]-C-terminal Gly-Gly + 2-[(2R,5Z)-2-carboxy-4-methylthiazol-5(2H)-ylidene]ethyl phosphate + 2 H2O + H(+). The protein operates within cofactor biosynthesis; thiamine diphosphate biosynthesis. Catalyzes the rearrangement of 1-deoxy-D-xylulose 5-phosphate (DXP) to produce the thiazole phosphate moiety of thiamine. Sulfur is provided by the thiocarboxylate moiety of the carrier protein ThiS. In vitro, sulfur can be provided by H(2)S. The polypeptide is Thiazole synthase (Mycolicibacterium smegmatis (strain ATCC 700084 / mc(2)155) (Mycobacterium smegmatis)).